We begin with the raw amino-acid sequence, 219 residues long: Epididymal secretory glutathione peroxidase (219 aa).

The N-terminal stretch at 1-21 (MTVQLGAFYLFPLFMAGFVQT) is a signal peptide. The active site involves C71.

It belongs to the glutathione peroxidase family. In terms of assembly, homotetramer. Proximal caput epididymis.

It is found in the secreted. It catalyses the reaction 2 glutathione + H2O2 = glutathione disulfide + 2 H2O. Its function is as follows. May constitute a glutathione peroxidase-like protective system against peroxide damage in sperm membrane lipids. Since the purified porcine enzyme has very little activity towards hydrogen peroxide or organic hydroperoxides the protective effect is not likely to be exerted by its enzymatic activity. Instead, may protect sperm from premature acrosome reaction in the epididymis by binding to lipid peroxides, which might otherwise interact with phospholipase A2 and induce the acrosome reaction. In Sus scrofa (Pig), this protein is Epididymal secretory glutathione peroxidase (GPX5).